The sequence spans 97 residues: Protein S100-A10 (97 aa).

N6-acetyllysine occurs at positions 23, 28, 54, and 57. Positions 47 to 82 (KDPLAVDKIMKDLDQCRDGKVGFQSFLSLVAGLTIA) constitute an EF-hand domain. The ancestral calcium site stretch occupies residues 60 to 71 (DQCRDGKVGFQS).

Belongs to the S-100 family. Heterotetramer containing 2 light chains of S100A10/p11 and 2 heavy chains of ANXA2/p36. Interacts with SCN10A. Interacts with TASOR.

Because S100A10 induces the dimerization of ANXA2/p36, it may function as a regulator of protein phosphorylation in that the ANXA2 monomer is the preferred target (in vitro) of tyrosine-specific kinase. This chain is Protein S100-A10 (S100a10), found in Mus musculus (Mouse).